The sequence spans 254 residues: MVIANKNIIFVAGLGGIGFDTSREIVKSGPKNLVILDRIENPAAIAELKALNPKVTVTFYPYDVTVSVAETTKLLKTIFDKLKTVDLLINGAGILDDYQIERTIAVNFTGTVNTTTAIMSFWDKRKGGPGGIIANICSVTGFNAIYQVPVYSASKAAALSFTNSLAKLAPITGVTAYSINPGITKTTLVHKFNSWLDVEPRVAELLLEHPTQTTLQCAQNFVKAIEANQNGAIWKLDLGTLEAIEWTKHWDSHI.

10–33 contacts NAD(+); sequence FVAGLGGIGFDTSREIVKSGPKNL. Serine 138 is a binding site for substrate. The active-site Proton acceptor is the tyrosine 151.

The protein belongs to the short-chain dehydrogenases/reductases (SDR) family. As to quaternary structure, homodimer.

It carries out the reaction a primary alcohol + NAD(+) = an aldehyde + NADH + H(+). The enzyme catalyses a secondary alcohol + NAD(+) = a ketone + NADH + H(+). The protein is Alcohol dehydrogenase 2 (Adh2) of Drosophila mulleri (Fruit fly).